Reading from the N-terminus, the 1059-residue chain is Endo-1,4-beta-xylanase A (1059 aa).

A signal peptide spans 1 to 30 (MQVRKRRGLLDVSTAVLVGILAGFLGVVLA). Positions 47 to 199 (SSLETVLALS…LDKVQVLAPK (153 aa)) are A-1. Residues 200–354 (ESGPKVIYET…DDVKIVDTTS (155 aa)) form an A-2 region. In terms of domain architecture, GH10 spans 364–692 (EKEIPALKEV…KLAYWAIVAP (329 aa)). Glutamate 502 functions as the Proton donor in the catalytic mechanism. Glutamate 608 acts as the Nucleophile in catalysis. CBM-cenC domains are found at residues 700-870 (KESR…LEGI) and 871-1059 (MVAT…RLIK).

This sequence belongs to the glycosyl hydrolase 10 (cellulase F) family.

It catalyses the reaction Endohydrolysis of (1-&gt;4)-beta-D-xylosidic linkages in xylans.. This is Endo-1,4-beta-xylanase A (xynA) from Thermotoga maritima (strain ATCC 43589 / DSM 3109 / JCM 10099 / NBRC 100826 / MSB8).